A 940-amino-acid chain; its full sequence is Isoleucine--tRNA ligase (940 aa).

The 'HIGH' region signature appears at 58-68 (PYANGSIHIGH). Glu-564 serves as a coordination point for L-isoleucyl-5'-AMP. The 'KMSKS' region motif lies at 605 to 609 (KMSKS). Position 608 (Lys-608) interacts with ATP. Zn(2+) is bound by residues Cys-903, Cys-906, Cys-923, and Cys-926.

This sequence belongs to the class-I aminoacyl-tRNA synthetase family. IleS type 1 subfamily. As to quaternary structure, monomer. Zn(2+) serves as cofactor.

Its subcellular location is the cytoplasm. The catalysed reaction is tRNA(Ile) + L-isoleucine + ATP = L-isoleucyl-tRNA(Ile) + AMP + diphosphate. Catalyzes the attachment of isoleucine to tRNA(Ile). As IleRS can inadvertently accommodate and process structurally similar amino acids such as valine, to avoid such errors it has two additional distinct tRNA(Ile)-dependent editing activities. One activity is designated as 'pretransfer' editing and involves the hydrolysis of activated Val-AMP. The other activity is designated 'posttransfer' editing and involves deacylation of mischarged Val-tRNA(Ile). The protein is Isoleucine--tRNA ligase of Shewanella baltica (strain OS223).